We begin with the raw amino-acid sequence, 166 residues long: 6,7-dimethyl-8-ribityllumazine synthase (166 aa).

5-amino-6-(D-ribitylamino)uracil is bound by residues F24, 58–60 (ALE), and 82–84 (AVI). 87-88 (ET) contributes to the (2S)-2-hydroxy-3-oxobutyl phosphate binding site. H90 acts as the Proton donor in catalysis. 5-amino-6-(D-ribitylamino)uracil is bound at residue N115. Position 129 (R129) interacts with (2S)-2-hydroxy-3-oxobutyl phosphate.

Belongs to the DMRL synthase family.

It catalyses the reaction (2S)-2-hydroxy-3-oxobutyl phosphate + 5-amino-6-(D-ribitylamino)uracil = 6,7-dimethyl-8-(1-D-ribityl)lumazine + phosphate + 2 H2O + H(+). Its pathway is cofactor biosynthesis; riboflavin biosynthesis; riboflavin from 2-hydroxy-3-oxobutyl phosphate and 5-amino-6-(D-ribitylamino)uracil: step 1/2. Functionally, catalyzes the formation of 6,7-dimethyl-8-ribityllumazine by condensation of 5-amino-6-(D-ribitylamino)uracil with 3,4-dihydroxy-2-butanone 4-phosphate. This is the penultimate step in the biosynthesis of riboflavin. The chain is 6,7-dimethyl-8-ribityllumazine synthase from Ralstonia pickettii (strain 12J).